Consider the following 284-residue polypeptide: uncharacterized protein (284 aa).

An AB hydrolase-1 domain is found at 25–123 (PILVMHGGHS…NTLTLQSAVT (99 aa)). Ser96 is an active-site residue.

This sequence belongs to the AB hydrolase superfamily.

This is an uncharacterized protein from Bacillus subtilis (strain 168).